The sequence spans 395 residues: Phosphoglycerate kinase (395 aa).

Substrate is bound by residues aspartate 21–asparagine 23, arginine 36, histidine 59–arginine 62, arginine 114, and arginine 147. Residues lysine 198, glutamate 320, and glycine 346–threonine 349 contribute to the ATP site.

Belongs to the phosphoglycerate kinase family. In terms of assembly, monomer.

The protein resides in the cytoplasm. It carries out the reaction (2R)-3-phosphoglycerate + ATP = (2R)-3-phospho-glyceroyl phosphate + ADP. Its pathway is carbohydrate degradation; glycolysis; pyruvate from D-glyceraldehyde 3-phosphate: step 2/5. The protein is Phosphoglycerate kinase of Nitrosospira multiformis (strain ATCC 25196 / NCIMB 11849 / C 71).